The primary structure comprises 624 residues: Chaperone protein DnaK (624 aa).

T174 carries the post-translational modification Phosphothreonine; by autocatalysis. Disordered regions lie at residues 544–563 (KKAQ…DDLS) and 576–624 (NAQK…DDKK). The segment covering 581-600 (QQAQGGPASGAATDAGAAQG) has biased composition (low complexity). The segment covering 601–624 (SDDKKSDDDTINGDYKDVSDDDKK) has biased composition (basic and acidic residues).

This sequence belongs to the heat shock protein 70 family.

In terms of biological role, acts as a chaperone. In Lacticaseibacillus casei (strain BL23) (Lactobacillus casei), this protein is Chaperone protein DnaK.